The sequence spans 647 residues: Homologous recombination OB-fold protein (647 aa).

Serine 47 bears the Phosphoserine mark. Disordered stretches follow at residues 284–361 (ARGT…GPQG), 380–399 (SRTP…RRFP), and 581–631 (SFLK…DDLD). An asymmetric dimethylarginine mark is found at arginine 285, arginine 295, arginine 329, and arginine 337. The segment covering 287–308 (TIQSSPQNRFPCQPFQSPSSWL) has biased composition (polar residues). The segment covering 319 to 332 (TPNSSCSTPSRTSS) has biased composition (low complexity). A compositionally biased stretch (polar residues) spans 380 to 390 (SRTPQQPTHPS). Residues 618–631 (ASPEEELPEADDLD) are compositionally biased toward acidic residues.

In terms of assembly, interacts with MCM8; this interaction is necessary for MCM8-MCM9 helicase complex recruitment to DNA damage sites. Interacts with RPA1; this interaction associates HROB with the RPA complex.

The protein resides in the nucleus. The protein localises to the chromosome. Its function is as follows. DNA-binding protein involved in homologous recombination that acts by recruiting the MCM8-MCM9 helicase complex to sites of DNA damage to promote DNA repair synthesis. The protein is Homologous recombination OB-fold protein of Homo sapiens (Human).